We begin with the raw amino-acid sequence, 504 residues long: MTSRKIPSIMGTQHPDNANAPFWESSQQPFISAYRETGEAFENFNELNVDEYMWDWEGKHADAAVIDRLFSTEYDYFKDHQIGRDKFLTFRFPNIWEEKGYNLMQAMTAFLSSEDFAHDLGFSRPLFEAILPMAQRADQILKMQVLFEKLANFKSAEFTRSDKNTPYIEMIPLFEDFETQLHAPEILKEYLNLHEEHFGFRPKYMRVFLAGSDSALTAGFMSSITGNKLAIARLHEFAEEENIEIFPISGTGSAIFRGGLSPHRIDRYVTEFPGVRTATVQSAFRYDFPIEEVQKGIAELKEKLPVAEPLKISLDDQKILTEIAEESAKFYSNTLDNLVPSMQAIFKAFPKRRDRRQHVGVLGYSRSVDGIELPRAINFTGSFYSVGVPPEFIGFGRALKHLDADHLSVFVRSYPSMSKDFNELARFVNMDALQILKTQNSAWAEVEEDILIMQRIFKFEIGPQTREEQQHAEIALQVVQFKDGAPVAITALINRMAQLRHFLG.

A compositionally biased stretch (polar residues) spans 1-16 (MTSRKIPSIMGTQHPD). Residues 1-21 (MTSRKIPSIMGTQHPDNANAP) are disordered.

Belongs to the PEPCase type 2 family. In terms of assembly, homotetramer. Requires Mg(2+) as cofactor.

The catalysed reaction is oxaloacetate + phosphate = phosphoenolpyruvate + hydrogencarbonate. Its function is as follows. Catalyzes the irreversible beta-carboxylation of phosphoenolpyruvate (PEP) to form oxaloacetate (OAA), a four-carbon dicarboxylic acid source for the tricarboxylic acid cycle. This Leuconostoc mesenteroides subsp. mesenteroides (strain ATCC 8293 / DSM 20343 / BCRC 11652 / CCM 1803 / JCM 6124 / NCDO 523 / NBRC 100496 / NCIMB 8023 / NCTC 12954 / NRRL B-1118 / 37Y) protein is Phosphoenolpyruvate carboxylase.